The chain runs to 140 residues: Small ribosomal subunit protein bS6 (140 aa).

Residues 96-140 (VTGQSEMLKAEENRSERRERRERPENAESNDGDDSDSNDSDNADE) are disordered. Positions 103-121 (LKAEENRSERRERRERPEN) are enriched in basic and acidic residues. A compositionally biased stretch (acidic residues) spans 123 to 140 (ESNDGDDSDSNDSDNADE).

The protein belongs to the bacterial ribosomal protein bS6 family.

Binds together with bS18 to 16S ribosomal RNA. The chain is Small ribosomal subunit protein bS6 from Ectopseudomonas mendocina (strain ymp) (Pseudomonas mendocina).